The chain runs to 160 residues: Cytochrome b6-f complex subunit 4 (160 aa).

3 consecutive transmembrane segments (helical) span residues 36-56, 95-115, and 131-151; these read LLYMFPVVILGTLSCITGLAV, LLGVLLMAAVPAGLLTVPFIE, and TVFLIGTVVAIWLGIGATLPI.

It belongs to the cytochrome b family. PetD subfamily. As to quaternary structure, the 4 large subunits of the cytochrome b6-f complex are cytochrome b6, subunit IV (17 kDa polypeptide, petD), cytochrome f and the Rieske protein, while the 4 small subunits are petG, petL, petM and petN. The complex functions as a dimer.

The protein resides in the plastid. It is found in the chloroplast thylakoid membrane. In terms of biological role, component of the cytochrome b6-f complex, which mediates electron transfer between photosystem II (PSII) and photosystem I (PSI), cyclic electron flow around PSI, and state transitions. The polypeptide is Cytochrome b6-f complex subunit 4 (Nephroselmis olivacea (Green alga)).